The primary structure comprises 485 residues: Subtilisin-like protease 1 (485 aa).

The first 19 residues, M1–A19, serve as a signal peptide directing secretion. Residues G20 to H116 constitute a propeptide that is removed on maturation. Residues S34–H116 enclose the Inhibitor I9 domain. Residues S126–K400 enclose the Peptidase S8 domain. Active-site charge relay system residues include D158 and H190. N-linked (GlcNAc...) asparagine glycosylation occurs at N251. S345 functions as the Charge relay system in the catalytic mechanism. The segment covering G377–I394 has biased composition (polar residues). Residues G377 to N462 are disordered. The segment covering P409–P418 has biased composition (pro residues). Residues S419 to Q428 show a composition bias toward low complexity. The segment covering P433–P455 has biased composition (pro residues).

It belongs to the peptidase S8 family.

The protein localises to the secreted. Functionally, secreted subtilisin-like serine protease with keratinolytic activity that contributes to pathogenicity. The chain is Subtilisin-like protease 1 (SUB1) from Arthroderma otae (Microsporum canis).